Reading from the N-terminus, the 787-residue chain is Filamentous growth regulator 27 (787 aa).

The interval 1–22 (MSAPIVETKKASKRRIRRIPDD) is disordered. The zn(2)-C6 fungal-type DNA-binding region spans 31 to 57 (CDNCKKRKFKCSGEKPCFECSKKGHDC). Positions 69-97 (GERMAKLKQKKDNNEKQRELVNEQIAQSS) form a coiled coil. 2 disordered regions span residues 120–140 (SSHS…SSIP) and 200–221 (RHKS…KGGI). Polar residues predominate over residues 209-221 (DNNTNNVPKKGGI).

It is found in the nucleus. Its function is as follows. Transcription factor involved in yeast cell adherence to silicone substrate, filamentous growth, and biofilm formation. This chain is Filamentous growth regulator 27 (FGR27), found in Candida albicans (strain SC5314 / ATCC MYA-2876) (Yeast).